Reading from the N-terminus, the 167-residue chain is Aphrodisin (167 aa).

Residues methionine 1 to alanine 16 form the signal peptide. Position 17 is a pyrrolidone carboxylic acid (glutamine 17). Cystine bridges form between cysteine 54–cysteine 58 and cysteine 73–cysteine 165. 2 N-linked (GlcNAc...) asparagine glycosylation sites follow: asparagine 57 and asparagine 85.

This sequence belongs to the calycin superfamily. Lipocalin family. In terms of tissue distribution, expressed in the vagina, uterus, and Bartholin's glands of female hamsters. Secreted in vaginal discharge.

The protein localises to the secreted. In terms of biological role, acts as an aphrodisiac pheromone, reliably eliciting copulatory behavior from male hamster. In Mesocricetus auratus (Golden hamster), this protein is Aphrodisin.